Consider the following 226-residue polypeptide: Cytidylate kinase (226 aa).

Position 10 to 18 (Gly10 to Thr18) interacts with ATP.

It localises to the cytoplasm. The catalysed reaction is CMP + ATP = CDP + ADP. It carries out the reaction dCMP + ATP = dCDP + ADP. This Streptococcus pyogenes serotype M6 (strain ATCC BAA-946 / MGAS10394) protein is Cytidylate kinase.